The following is a 65-amino-acid chain: Large ribosomal subunit protein uL29 (65 aa).

A disordered region spans residues 30 to 49 (ERSSVAMGGAPSSPGKMRSI).

The protein belongs to the universal ribosomal protein uL29 family.

The chain is Large ribosomal subunit protein uL29 from Picrophilus torridus (strain ATCC 700027 / DSM 9790 / JCM 10055 / NBRC 100828 / KAW 2/3).